Reading from the N-terminus, the 589-residue chain is Serine/threonine-protein kinase PknJ (589 aa).

Over 1-342 the chain is Cytoplasmic; the sequence is MAHELSAGSV…LPRRPRRYRR (342 aa). A Protein kinase domain is found at 14-276; it reads YRIERMLGAG…SAGEFAHAAA (263 aa). Residues 20–28 and Lys43 each bind ATP; that span reads LGAGGMGTV. Asp136 serves as the catalytic Proton acceptor. A helical transmembrane segment spans residues 343-363; that stretch reads GVAAVAAVMVVAAAAVTAVTM. At 364–589 the chain is on the extracellular side; that stretch reads TSHQPRTATP…TNYILAKIPG (226 aa). The span at 365-387 shows a compositional bias: low complexity; the sequence is SHQPRTATPPSAAALSPTSSSTT. The tract at residues 365–400 is disordered; sequence SHQPRTATPPSAAALSPTSSSTTPPQPPIVTRSRLP.

It belongs to the protein kinase superfamily. Ser/Thr protein kinase family. As to quaternary structure, homodimer.

The protein localises to the cell membrane. It carries out the reaction L-seryl-[protein] + ATP = O-phospho-L-seryl-[protein] + ADP + H(+). The catalysed reaction is L-threonyl-[protein] + ATP = O-phospho-L-threonyl-[protein] + ADP + H(+). This is Serine/threonine-protein kinase PknJ (pknJ) from Mycobacterium bovis (strain ATCC BAA-935 / AF2122/97).